We begin with the raw amino-acid sequence, 144 residues long: Large ribosomal subunit protein uL15 (144 aa).

Residues 1–49 (MIKLECLQDPSPRKRRTKLLGRGPSSGHGKTSSRGHKGDCSRSGYKRRF) are disordered.

This sequence belongs to the universal ribosomal protein uL15 family. In terms of assembly, part of the 50S ribosomal subunit.

In terms of biological role, binds to the 23S rRNA. In Chlamydia trachomatis serovar A (strain ATCC VR-571B / DSM 19440 / HAR-13), this protein is Large ribosomal subunit protein uL15.